The primary structure comprises 214 residues: Thymidylate kinase (214 aa).

ATP is bound at residue 10–17 (GGEGVGKT).

The protein belongs to the thymidylate kinase family.

It catalyses the reaction dTMP + ATP = dTDP + ADP. Phosphorylation of dTMP to form dTDP in both de novo and salvage pathways of dTTP synthesis. This Bartonella quintana (strain Toulouse) (Rochalimaea quintana) protein is Thymidylate kinase.